Here is a 198-residue protein sequence, read N- to C-terminus: Recombination protein RecR (198 aa).

The segment at 57 to 72 (CSVCGNLTDEDPCSIC) adopts a C4-type zinc-finger fold. A Toprim domain is found at 80-175 (SMILVVEDSK…KVTRLARGLA (96 aa)).

It belongs to the RecR family.

May play a role in DNA repair. It seems to be involved in an RecBC-independent recombinational process of DNA repair. It may act with RecF and RecO. In Streptococcus uberis (strain ATCC BAA-854 / 0140J), this protein is Recombination protein RecR.